The following is a 389-amino-acid chain: Mannitol-1-phosphate 5-dehydrogenase (389 aa).

5–16 (AVHFGAGNIGRG) serves as a coordination point for NAD(+). Lysine 215 is a catalytic residue.

This sequence belongs to the mannitol dehydrogenase family. In terms of assembly, monomer.

The enzyme catalyses D-mannitol 1-phosphate + NAD(+) = beta-D-fructose 6-phosphate + NADH + H(+). Functionally, catalyzes the NAD(H)-dependent interconversion of D-fructose 6-phosphate and D-mannitol 1-phosphate in the mannitol metabolic pathway. The polypeptide is Mannitol-1-phosphate 5-dehydrogenase (Sclerotinia sclerotiorum (strain ATCC 18683 / 1980 / Ss-1) (White mold)).